We begin with the raw amino-acid sequence, 690 residues long: Rho guanine nucleotide exchange factor 4 (690 aa).

Residues 73–126 (KTQRKKLQKQAHVERRLHIGAVHKDGVKCWRKTIITSPESLNLPRRSHPLSQSA) are ABR (APC-binding region) domain. The segment at 113–145 (LNLPRRSHPLSQSAPTGLNHMGWPEHTPGTAMP) is disordered. The region spanning 194-253 (GSVVCAEALWDHVTMDDQELGFKAGDVIEVMDATNREWWWGRVADGEGWFPASFVRLRVN) is the SH3 domain. The segment at 257 to 282 (PADDDAPLAGNSGAEDGGAEAQSSKD) is disordered. Residues 284–468 (MRTNVINEIL…KNVAQLINER (185 aa)) form the DH domain. The PH domain occupies 499-606 (ELIYSGELTR…WLKAFARERE (108 aa)).

In terms of assembly, isoform 3 interacts with RHOA and RAC1, and (via ABR domain) with APC. Found in a complex consisting of ARHGEF4, APC and CTNNB1. As to expression, expressed at high levels in the brain, skeletal muscle and testis and at low levels in the kidney, lung, small intestine, ovary and prostate. Expression is aberrantly enhanced in most colorectal tumors.

The protein localises to the cytoplasm. Its subcellular location is the cell projection. It is found in the ruffle membrane. In terms of biological role, acts as a guanine nucleotide exchange factor (GEF) for RHOA, RAC1 and CDC42 GTPases. Binding of APC may activate RAC1 GEF activity. The APC-ARHGEF4 complex seems to be involved in cell migration as well as in E-cadherin-mediated cell-cell adhesion. Required for MMP9 up-regulation via the JNK signaling pathway in colorectal tumor cells. Involved in tumor angiogenesis and may play a role in intestinal adenoma formation and tumor progression. In Homo sapiens (Human), this protein is Rho guanine nucleotide exchange factor 4 (ARHGEF4).